Reading from the N-terminus, the 119-residue chain is Ribosome-binding factor A (119 aa).

The protein belongs to the RbfA family. As to quaternary structure, monomer. Binds 30S ribosomal subunits, but not 50S ribosomal subunits or 70S ribosomes.

Its subcellular location is the cytoplasm. In terms of biological role, one of several proteins that assist in the late maturation steps of the functional core of the 30S ribosomal subunit. Associates with free 30S ribosomal subunits (but not with 30S subunits that are part of 70S ribosomes or polysomes). Required for efficient processing of 16S rRNA. May interact with the 5'-terminal helix region of 16S rRNA. The chain is Ribosome-binding factor A from Pelodictyon phaeoclathratiforme (strain DSM 5477 / BU-1).